The sequence spans 146 residues: UPF0178 protein BCQ_2874 (146 aa).

The protein belongs to the UPF0178 family.

This is UPF0178 protein BCQ_2874 from Bacillus cereus (strain Q1).